The primary structure comprises 579 residues: MSSCRYNGGVMRPLSNLSASRRNLHEMDSEAQPLQPPASVGGGGGASSPSAAAAAAAAVSSSAPEIVVSKPEHNNSNNLALYGTGGGGSTGGGGGGGGSGHGSSSGTKSSKKKNQNIGYKLGHRRALFEKRKRLSDYALIFGMFGIVVMVIETELSWGAYDKASLYSLALKCLISLSTIILLGLIIVYHAREIQLFMVDNGADDWRIAMTYERIFFICLEILVCAIHPIPGNYTFTWTARLAFSYAPSTTTADVDIILSIPMFLRLYLIARVMLLHSKLFTDASSRSIGALNKINFNTRFVMKTLMTICPGTVLLVFSISLWIIAAWTVRACERYHDQQDVTSNFLGAMWLISITFLSIGYGDMVPNTYCGKGVCLLTGIMGAGCTALVVAVVARKLELTKAEKHVHNFMMDTQLTKRVKNAAANVLRETWLIYKNTKLVKKIDHAKVRKHQRKFLQAIHQLRSVKMEQRKLNDQANTLVDLAKTQNIMYDMISDLNERSEDFEKRIVTLETKLETLIGSIHALPGLISQTIRQQQRDFIEAQMESYDKHVTYNAERSRSSSRRRRSSSTAPPTSSESS.

Disordered stretches follow at residues 1–54 (MSSC…AAAA) and 90–115 (TGGG…KKNQ). Residues 90 to 103 (TGGGGGGGGSGHGS) are compositionally biased toward gly residues. A helical membrane pass occupies residues 138-158 (ALIFGMFGIVVMVIETELSWG). At tyrosine 160 the chain carries Phosphotyrosine. The chain crosses the membrane as a helical span at residues 168 to 188 (LALKCLISLSTIILLGLIIVY). A helical transmembrane segment spans residues 214-234 (IFFICLEILVCAIHPIPGNYT). The chain crosses the membrane as a helical span at residues 256-276 (IILSIPMFLRLYLIARVMLLH). A helical membrane pass occupies residues 305–325 (LMTICPGTVLLVFSISLWIIA). The pore-forming intramembrane region spans 345–365 (FLGAMWLISITFLSIGYGDMV). The helical transmembrane segment at 374–394 (VCLLTGIMGAGCTALVVAVVA) threads the bilayer. Residues 412–488 (DTQLTKRVKN…LVDLAKTQNI (77 aa)) form a calmodulin-binding region. Residues 551–579 (VTYNAERSRSSSRRRRSSSTAPPTSSESS) form a disordered region. Residues 568–579 (SSTAPPTSSESS) show a composition bias toward low complexity.

The protein belongs to the potassium channel KCNN family. KCa2.2/KCNN2 subfamily. As to quaternary structure, homodimer. Heteromultimer with KCNN1 and KCNN3. The complex is composed of 4 channel subunits each of which binds to a calmodulin subunit which regulates the channel activity through calcium-binding. Interacts (via N-terminal domain) with MPP2. Expressed in atrial myocytes (at protein level). Widely expressed.

The protein resides in the membrane. It is found in the cytoplasm. Its subcellular location is the myofibril. It localises to the sarcomere. The protein localises to the z line. It catalyses the reaction K(+)(in) = K(+)(out). With respect to regulation, inhibited by bee venom neurotoxin apamin. Inhibited by UCL 1684 and tetraethylammonium (TEA). Functionally, small conductance calcium-activated potassium channel that mediates the voltage-independent transmembrane transfer of potassium across the cell membrane through a constitutive interaction with calmodulin which binds the intracellular calcium allowing its opening. The current is characterized by a voltage-independent activation, an intracellular calcium concentration increase-dependent activation and a single-channel conductance of about 3 picosiemens. Also presents an inwardly rectifying current, thus reducing its already small outward conductance of potassium ions, which is particularly the case when the membrane potential displays positive values, above + 20 mV. The inward rectification could be due to a blockade of the outward current by intracellular divalent cations such as calcium and magnesium and could also be due to an intrinsic property of the channel pore, independent of intracellular divalent ions. There are three positively charged amino acids in the S6 transmembrane domain, close to the pore, that collectively control the conductance and rectification through an electrostatic mechanism. Additionally, electrostatic contributions from these residues also play an important role in determining the intrinsic open probability of the channel in the absence of calcium, affecting the apparent calcium affinity for activation. Forms an heteromeric complex with calmodulin, which is constitutively associated in a calcium-independent manner. Channel opening is triggered when calcium binds the calmodulin resulting in a rotary movement leading to the formation of the dimeric complex to open the gate. Plays a role in the repolarization phase of cardiac action potential. This chain is Small conductance calcium-activated potassium channel protein 2, found in Homo sapiens (Human).